An 83-amino-acid chain; its full sequence is Small ribosomal subunit protein bS16 (83 aa).

This sequence belongs to the bacterial ribosomal protein bS16 family.

This Azoarcus sp. (strain BH72) protein is Small ribosomal subunit protein bS16.